Here is a 320-residue protein sequence, read N- to C-terminus: MNEKLQKVLARAGHGSRRELEALIKSGRVSVNGIVAKLGERLEDEQAVVRIDGHVVSVKAQEEVICRVLAYYKPEGELCTRHDPEGRRTVFDRLPKIRGSRWISVGRLDANTSGLLLFTTDGELANRLMHPSRQVEREYLVRVFGEVNEHKVRNLVNGVELDDGLARFEDVVYTGGEGMNHTFYVVINEGRNREVRRLWESQDCTVSRLKRVRYGDIYLDKKLPRGGWMELELKDVNYLRELVELRPEKETMIELNNSSRKRDRARSQKIRRAVKRHEERVSTPKGRSNNAARRKPSKADGQTNKTNSRNQAGSRSKPQR.

Positions 3-68 constitute an S4 RNA-binding domain; the sequence is EKLQKVLARA…KAQEEVICRV (66 aa). D109 serves as the catalytic Nucleophile. The interval 254–320 is disordered; it reads ELNNSSRKRD…QAGSRSKPQR (67 aa). Basic residues predominate over residues 259-275; that stretch reads SRKRDRARSQKIRRAVK. Polar residues predominate over residues 300 to 320; that stretch reads DGQTNKTNSRNQAGSRSKPQR.

The protein belongs to the pseudouridine synthase RsuA family.

It catalyses the reaction uridine(2605) in 23S rRNA = pseudouridine(2605) in 23S rRNA. Responsible for synthesis of pseudouridine from uracil-2605 in 23S ribosomal RNA. This chain is Ribosomal large subunit pseudouridine synthase B (rluB), found in Vibrio vulnificus (strain CMCP6).